A 259-amino-acid polypeptide reads, in one-letter code: Phosphate import ATP-binding protein PstB (259 aa).

The region spanning 5-248 is the ABC transporter domain; the sequence is IEVNDLNVYY…NIIFSNPSAQ (244 aa). 37–44 contacts ATP; sequence GPSGCGKS.

The protein belongs to the ABC transporter superfamily. Phosphate importer (TC 3.A.1.7) family. The complex is composed of two ATP-binding proteins (PstB), two transmembrane proteins (PstC and PstA) and a solute-binding protein (PstS).

It localises to the cell membrane. It catalyses the reaction phosphate(out) + ATP + H2O = ADP + 2 phosphate(in) + H(+). Functionally, part of the ABC transporter complex PstSACB involved in phosphate import. Responsible for energy coupling to the transport system. The chain is Phosphate import ATP-binding protein PstB from Leifsonia xyli subsp. xyli (strain CTCB07).